Consider the following 466-residue polypeptide: Cysteine--tRNA ligase (466 aa).

Cys-28 is a Zn(2+) binding site. A 'HIGH' region motif is present at residues 30 to 40; it reads PTVYNYIHIGN. Residues Cys-208, His-233, and Glu-237 each coordinate Zn(2+). The 'KMSKS' region signature appears at 265 to 269; sequence KMSKS. Lys-268 contributes to the ATP binding site.

The protein belongs to the class-I aminoacyl-tRNA synthetase family. In terms of assembly, monomer. It depends on Zn(2+) as a cofactor.

The protein resides in the cytoplasm. It carries out the reaction tRNA(Cys) + L-cysteine + ATP = L-cysteinyl-tRNA(Cys) + AMP + diphosphate. In Staphylococcus haemolyticus (strain JCSC1435), this protein is Cysteine--tRNA ligase.